We begin with the raw amino-acid sequence, 679 residues long: Methionine--tRNA ligase (679 aa).

The 'HIGH' region signature appears at 12–22; that stretch reads PYANGAIHLGH. Positions 143, 146, 156, and 159 each coordinate Zn(2+). A 'KMSKS' region motif is present at residues 328–332; the sequence is KMSKS. Residue Lys331 participates in ATP binding. Residues 577–679 enclose the tRNA-binding domain; the sequence is DFAKLDLRVA…EGIRPGMQVK (103 aa).

The protein belongs to the class-I aminoacyl-tRNA synthetase family. MetG type 1 subfamily. Homodimer. The cofactor is Zn(2+).

Its subcellular location is the cytoplasm. The enzyme catalyses tRNA(Met) + L-methionine + ATP = L-methionyl-tRNA(Met) + AMP + diphosphate. Functionally, is required not only for elongation of protein synthesis but also for the initiation of all mRNA translation through initiator tRNA(fMet) aminoacylation. The sequence is that of Methionine--tRNA ligase from Actinobacillus pleuropneumoniae serotype 5b (strain L20).